A 380-amino-acid polypeptide reads, in one-letter code: Beta sliding clamp (380 aa).

The protein belongs to the beta sliding clamp family. As to quaternary structure, forms a ring-shaped head-to-tail homodimer around DNA which binds and tethers DNA polymerases and other proteins to the DNA. The DNA replisome complex has a single clamp-loading complex (3 tau and 1 each of delta, delta', psi and chi subunits) which binds 3 Pol III cores (1 core on the leading strand and 2 on the lagging strand) each with a beta sliding clamp dimer. Additional proteins in the replisome are other copies of gamma, psi and chi, Ssb, DNA helicase and RNA primase.

It is found in the cytoplasm. In terms of biological role, confers DNA tethering and processivity to DNA polymerases and other proteins. Acts as a clamp, forming a ring around DNA (a reaction catalyzed by the clamp-loading complex) which diffuses in an ATP-independent manner freely and bidirectionally along dsDNA. Initially characterized for its ability to contact the catalytic subunit of DNA polymerase III (Pol III), a complex, multichain enzyme responsible for most of the replicative synthesis in bacteria; Pol III exhibits 3'-5' exonuclease proofreading activity. The beta chain is required for initiation of replication as well as for processivity of DNA replication. The protein is Beta sliding clamp (dnaN) of Mycoplasma genitalium (strain ATCC 33530 / DSM 19775 / NCTC 10195 / G37) (Mycoplasmoides genitalium).